The following is a 156-amino-acid chain: Snaclec A3 (156 aa).

The signal sequence occupies residues 1–23 (MGRSISVSFGLLVVFLSLSGTGA). 3 disulfides stabilise this stretch: Cys27-Cys38, Cys55-Cys154, and Cys129-Cys146. In terms of domain architecture, C-type lectin spans 34–155 (HEGHCYKVFN…CGQPYRFTCE (122 aa)).

The protein belongs to the snaclec family. In terms of assembly, heterodimer; disulfide-linked. As to expression, expressed by the venom gland.

It is found in the secreted. Functionally, interferes with one step of hemostasis (modulation of platelet aggregation, or coagulation cascade, for example). The polypeptide is Snaclec A3 (Macrovipera lebetinus (Levantine viper)).